Reading from the N-terminus, the 213-residue chain is Ribonuclease T (213 aa).

The 175-residue stretch at 28–202 folds into the Exonuclease domain; it reads VVVDVETGGF…YDTEQTARLF (175 aa). Mg(2+) is bound by residues Asp-31, Glu-33, His-189, and Asp-194. His-189 serves as the catalytic Proton donor/acceptor.

Belongs to the RNase T family. Homodimer. It depends on Mg(2+) as a cofactor.

Trims short 3' overhangs of a variety of RNA species, leaving a one or two nucleotide 3' overhang. Responsible for the end-turnover of tRNA: specifically removes the terminal AMP residue from uncharged tRNA (tRNA-C-C-A). Also appears to be involved in tRNA biosynthesis. This is Ribonuclease T from Xanthomonas euvesicatoria pv. vesicatoria (strain 85-10) (Xanthomonas campestris pv. vesicatoria).